Consider the following 359-residue polypeptide: MIDKNFWQGKRVFVTGHTGFKGSWLSLWLTEMGAIVKGYALDAPTVPSLFEIVRLNDLMESHIGDIRDFEKLRNSIAEFKPEIVFHMAAQPLVRLSYEQPIETYSTNVMGTVHLLETVKQVGNIKAVVNITSDKCYDNREWVWGYRENEPMGGYDPYSNSKGCAELVASAFRNSFFNPANYEQHGVGLASVRAGNVIGGGDWAKDRLIPDILRSFENNQQVIIRNPYSIRPWQHVLEPLSGYIVVAQRLYTEGAKFSEGWNFGPRDEDAKTVEFIVDKMVTLWGDDASWLLDGENHPHEAHYLKLDCSKANMQLGWHPRWGLTETLGRIVKWHKAWIRGEDMLICSKREISDYMSATTR.

The protein belongs to the NAD(P)-dependent epimerase/dehydratase family. It depends on NAD(+) as a cofactor.

It catalyses the reaction CDP-D-glucose = CDP-4-dehydro-6-deoxy-D-glucose + H2O. The protein operates within nucleotide-sugar biosynthesis; CDP-3,6-dideoxy-D-mannose biosynthesis; CDP-3,6-dideoxy-D-mannose from CTP and alpha-D-glucose 1-phosphate: step 2/5. It participates in bacterial outer membrane biogenesis; LPS O-antigen biosynthesis. This Salmonella typhimurium (strain LT2 / SGSC1412 / ATCC 700720) protein is CDP-glucose 4,6-dehydratase (rfbG).